The primary structure comprises 75 residues: UPF0235 protein MSMEG_3845 (75 aa).

This sequence belongs to the UPF0235 family.

This is UPF0235 protein MSMEG_3845 from Mycolicibacterium smegmatis (strain ATCC 700084 / mc(2)155) (Mycobacterium smegmatis).